The primary structure comprises 502 residues: ATP synthase subunit alpha (502 aa).

ATP is bound at residue 169–176; it reads GDRQTGKT.

The protein belongs to the ATPase alpha/beta chains family. In terms of assembly, F-type ATPases have 2 components, CF(1) - the catalytic core - and CF(0) - the membrane proton channel. CF(1) has five subunits: alpha(3), beta(3), gamma(1), delta(1), epsilon(1). CF(0) has three main subunits: a(1), b(2) and c(9-12). The alpha and beta chains form an alternating ring which encloses part of the gamma chain. CF(1) is attached to CF(0) by a central stalk formed by the gamma and epsilon chains, while a peripheral stalk is formed by the delta and b chains.

Its subcellular location is the cell membrane. The enzyme catalyses ATP + H2O + 4 H(+)(in) = ADP + phosphate + 5 H(+)(out). Produces ATP from ADP in the presence of a proton gradient across the membrane. The alpha chain is a regulatory subunit. This is ATP synthase subunit alpha from Clostridium perfringens (strain SM101 / Type A).